Here is a 387-residue protein sequence, read N- to C-terminus: Acyl-CoA dehydrogenase FadE29 (387 aa).

Residues 123–126 (IGYT), T132, and T158 contribute to the FAD site. Residue E241 is the Proton acceptor of the active site. 367–369 (VNE) contacts FAD.

This sequence belongs to the acyl-CoA dehydrogenase family. Heterotetramer composed of FadE28 and FadE29. FAD is required as a cofactor.

The enzyme catalyses 3-oxochol-4-en-22-oyl-CoA + A = 3-oxochola-4,17-dien-22-oyl-CoA + AH2. It participates in steroid metabolism; cholesterol degradation. Involved in the third cycle of side chain dehydrogenation in the beta-oxidation of cholesterol catabolism. Contributes partly to the virulence by increasing the efficiency of beta-oxidation. Catalyzes the dehydrogenation of 2'-propanoyl-CoA ester side chains of 3-oxo-4-pregnene-20-carboxyl-CoA (3-OPC-CoA) to yield 3-oxo-4,17-pregnadiene-20-carboxyl-CoA (3-OPDC-CoA). Also able to dehydrogenate steroyl-CoA such as 3-oxo-chol-4-en-24-oyl-CoA (3-OCO-CoA), 1beta-(2'-propanoyl-CoA)-3a-alpha-H- 7a-beta-methylhexahydro-4-indanone (indanone-CoA ester), hexahydroindanone and pregenenone. In Mycobacterium tuberculosis (strain ATCC 25618 / H37Rv), this protein is Acyl-CoA dehydrogenase FadE29 (fadE29).